Reading from the N-terminus, the 252-residue chain is Metalloprotease LoiP (252 aa).

Residues 1-18 form the signal peptide; sequence MKIRALLVAMSVATVLTG. A lipid anchor (N-palmitoyl cysteine) is attached at C19. C19 carries S-diacylglycerol cysteine lipidation. A disulfide bridge connects residues C53 and C108. Zn(2+) is bound at residue H130. The active site involves E131. Zn(2+)-binding residues include H134 and E189. Residues 224–252 form a disordered region; that stretch reads RQSSMFDDHPASAERAQHIRDRMSADGIK.

Belongs to the peptidase M48B family. Interacts with Era and BepA. The cofactor is Zn(2+). The intramolecular disulfide bond improves the stability and the activity of LoiP. It forms even in the absence of the oxido-reductase DsbA.

It is found in the cell outer membrane. Its function is as follows. Metalloprotease that cleaves substrates preferentially between Phe-Phe residues. Plays a role in response to some stress conditions. Seems to regulate the expression of speB. This chain is Metalloprotease LoiP (loiP), found in Escherichia coli (strain K12).